The sequence spans 211 residues: Adenylyl-sulfate kinase (211 aa).

Residue 36-43 (GLSGSGKS) coordinates ATP. The Phosphoserine intermediate role is filled by Ser110.

This sequence belongs to the APS kinase family.

It catalyses the reaction adenosine 5'-phosphosulfate + ATP = 3'-phosphoadenylyl sulfate + ADP + H(+). It participates in sulfur metabolism; hydrogen sulfide biosynthesis; sulfite from sulfate: step 2/3. Its function is as follows. Catalyzes the synthesis of activated sulfate. This is Adenylyl-sulfate kinase (cysC) from Buchnera aphidicola subsp. Schizaphis graminum (strain Sg).